The following is a 456-amino-acid chain: Phosphomethylpyrimidine synthase (456 aa).

Residues N80, M109, Y139, H175, 195–197 (SRG), 236–239 (DSLR), and E275 contribute to the substrate site. H279 is a binding site for Zn(2+). Y302 serves as a coordination point for substrate. A Zn(2+)-binding site is contributed by H343. Positions 423, 426, and 431 each coordinate [4Fe-4S] cluster.

The protein belongs to the ThiC family. It depends on [4Fe-4S] cluster as a cofactor.

The enzyme catalyses 5-amino-1-(5-phospho-beta-D-ribosyl)imidazole + S-adenosyl-L-methionine = 4-amino-2-methyl-5-(phosphooxymethyl)pyrimidine + CO + 5'-deoxyadenosine + formate + L-methionine + 3 H(+). It functions in the pathway cofactor biosynthesis; thiamine diphosphate biosynthesis. In terms of biological role, catalyzes the synthesis of the hydroxymethylpyrimidine phosphate (HMP-P) moiety of thiamine from aminoimidazole ribotide (AIR) in a radical S-adenosyl-L-methionine (SAM)-dependent reaction. The chain is Phosphomethylpyrimidine synthase from Synechococcus elongatus (strain ATCC 33912 / PCC 7942 / FACHB-805) (Anacystis nidulans R2).